Reading from the N-terminus, the 113-residue chain is ATP-dependent Clp protease adapter protein ClpS (113 aa).

The protein belongs to the ClpS family. As to quaternary structure, binds to the N-terminal domain of the chaperone ClpA.

Involved in the modulation of the specificity of the ClpAP-mediated ATP-dependent protein degradation. In Corynebacterium diphtheriae (strain ATCC 700971 / NCTC 13129 / Biotype gravis), this protein is ATP-dependent Clp protease adapter protein ClpS.